Reading from the N-terminus, the 199-residue chain is Octanoyltransferase (199 aa).

A BPL/LPL catalytic domain is found at 27–199 (SNSYDELWLL…FVQYFLTQFK (173 aa)). Substrate contacts are provided by residues 66–73 (RGGQVTYH), 133–135 (SIG), and 146–148 (GIA). Catalysis depends on C164, which acts as the Acyl-thioester intermediate.

Belongs to the LipB family.

Its subcellular location is the cytoplasm. The catalysed reaction is octanoyl-[ACP] + L-lysyl-[protein] = N(6)-octanoyl-L-lysyl-[protein] + holo-[ACP] + H(+). Its pathway is protein modification; protein lipoylation via endogenous pathway; protein N(6)-(lipoyl)lysine from octanoyl-[acyl-carrier-protein]: step 1/2. Functionally, catalyzes the transfer of endogenously produced octanoic acid from octanoyl-acyl-carrier-protein onto the lipoyl domains of lipoate-dependent enzymes. Lipoyl-ACP can also act as a substrate although octanoyl-ACP is likely to be the physiological substrate. This Legionella pneumophila (strain Lens) protein is Octanoyltransferase.